Here is a 104-residue protein sequence, read N- to C-terminus: SOSS complex subunit C (104 aa).

A2 carries the N-acetylalanine modification. S50 bears the Phosphoserine mark.

This sequence belongs to the SOSS-C family. In terms of assembly, component of the SOSS complex, composed of SOSS-B (SOSS-B1/NABP2 or SOSS-B2/NABP1), SOSS-A/INTS3 and SOSS-C/INIP. SOSS complexes containing SOSS-B1/NABP2 are more abundant than complexes containing SOSS-B2/NABP1. Interacts with INTS3; the interaction is direct.

Its subcellular location is the nucleus. Its function is as follows. Component of the SOSS complex, a multiprotein complex that functions downstream of the MRN complex to promote DNA repair and G2/M checkpoint. The SOSS complex associates with single-stranded DNA at DNA lesions and influences diverse endpoints in the cellular DNA damage response including cell-cycle checkpoint activation, recombinational repair and maintenance of genomic stability. Required for efficient homologous recombination-dependent repair of double-strand breaks (DSBs) and ATM-dependent signaling pathways. The protein is SOSS complex subunit C (INIP) of Homo sapiens (Human).